We begin with the raw amino-acid sequence, 23 residues long: Alyteserin-1a (23 aa).

Asn23 is modified (asparagine amide).

Expressed by the skin glands.

The protein localises to the secreted. It is found in the target cell membrane. Functionally, antibacterial peptide with amphipathic alpha-helical structure. Shows selective growth inhibitory activity against the Gram-negative bacteria E.coli (MIC=25 uM) Has a weak hemolytic activity against human erythrocytes (LC(50)&gt;100 uM). Is very weakly active against S.aureus (MIC=200 uM). This Alytes obstetricans (Common midwife toad) protein is Alyteserin-1a.